The following is a 696-amino-acid chain: MVHTVQAECCGKTITIETGKIAKQASGAVMIKSGDTMVLVTAVAMKSAKEGQGFFPLTVNYQEKAYAGGRIPGSFFKREGRPSDNETLTCRLIDRPIRPLFPEGFLNDTQVMATVVSADKDNDPAILSMIGASAALMVSDCPFAGPIAGVKVGRVNGAFIANPTAEELEKSDLEIVIAASQEAILMVEGSAAEVSENDLLEAIFFGHAAVQPILAAQLELAKKVGTPKRVILAPVVNEELKARVAALAKEGMKQAVRIKTKVERHLAIDAITAETVAALAAEFEGSEKEVKGFIEDLEYDLVREHIIKDGQRIDGRDTKTIRAISTEVSLLPRAHGSALFTRGETQSIVAATLGTSVDEQRIDSLYGDSRKKFMLHYNFPPYSVGETSFRLAPGRREIGHGMLAERALQQVLPKHDDFPYTIRIVSDITESNGSSSMATVCGGSLSMMDAGIPIKAPVAGIAMGLIKEGDDFAILSDILGDEDHLGDMDFKVAGTAEGVTALQMDIKIGGVTREIMSAALAQAKAGRIHILGEMAKTIAASRGDLSAFAPRITTIWVKVDKIRDVIGSGGKNIRSVTEATGVSIDIDDTGKINIASTNKEACDLAIKMIRNLTAEAEEGKLYMGTVKKIMEFGAFVEIFPGTDGLVHVSELDTERVKNVSDILKEGDKVLVKCIGIDKQGKIKLSRKEALGQTFTE.

Positions 483 and 489 each coordinate Mg(2+). The KH domain maps to 550–609 (PRITTIWVKVDKIRDVIGSGGKNIRSVTEATGVSIDIDDTGKINIASTNKEACDLAIKMI). The 69-residue stretch at 619–687 (GKLYMGTVKK…KQGKIKLSRK (69 aa)) folds into the S1 motif domain.

Belongs to the polyribonucleotide nucleotidyltransferase family. The cofactor is Mg(2+).

The protein localises to the cytoplasm. The enzyme catalyses RNA(n+1) + phosphate = RNA(n) + a ribonucleoside 5'-diphosphate. Its function is as follows. Involved in mRNA degradation. Catalyzes the phosphorolysis of single-stranded polyribonucleotides processively in the 3'- to 5'-direction. This chain is Polyribonucleotide nucleotidyltransferase, found in Geobacter sp. (strain M21).